The primary structure comprises 123 residues: Large ribosomal subunit protein bL19 (123 aa).

The protein belongs to the bacterial ribosomal protein bL19 family.

In terms of biological role, this protein is located at the 30S-50S ribosomal subunit interface and may play a role in the structure and function of the aminoacyl-tRNA binding site. This is Large ribosomal subunit protein bL19 from Acinetobacter baylyi (strain ATCC 33305 / BD413 / ADP1).